A 92-amino-acid polypeptide reads, in one-letter code: Small archaeal modifier protein 3 (92 aa).

Glycyl lysine isopeptide (Lys-Gly) (interchain with G-Cter in SAMP3) cross-links involve residues Lys-18, Lys-55, and Lys-62. Gly-92 bears the Glycyl adenylate; alternate mark. Residue Gly-92 forms a Glycyl lysine isopeptide (Gly-Lys) (interchain with K-? in acceptor proteins); alternate linkage.

As to quaternary structure, monomer. The C-terminal glycine is likely acyl-adenylated (-COAMP) by UbaA.

In terms of biological role, functions as a protein modifier covalently attached to lysine residues of substrate proteins. The protein modification process is termed sampylation and involves the formation of an isopeptide bond between the SAMP3 C-terminal glycine carboxylate and the epsilon-amino group of lysine residues on target proteins. Seems to be able to form polymeric chains with itself at Lys-18, Lys-55 and Lys-62, similar to ubiquitin and other ubiquitin-like proteins. SAMP3 appears not to serve as a proteolytic signal in the cell to target proteins for degradation by proteasomes. May regulate molybdenum cofactor (MoCo) biosynthesis by inhibiting the activity of MPT synthase MoaE under aerobic conditions, providing a hierarchy of oxygen use prior to that of alternative electron acceptors such as DMSO. This Haloferax volcanii (strain ATCC 29605 / DSM 3757 / JCM 8879 / NBRC 14742 / NCIMB 2012 / VKM B-1768 / DS2) (Halobacterium volcanii) protein is Small archaeal modifier protein 3 (samp3).